Consider the following 332-residue polypeptide: DNA-directed RNA polymerase subunit alpha (332 aa).

Positions 1–234 (MTVTANQVLR…DQLSVFGDFT (234 aa)) are alpha N-terminal domain (alpha-NTD). The segment at 248–332 (VDPVLLRPID…AGVASHGMLG (85 aa)) is alpha C-terminal domain (alpha-CTD).

This sequence belongs to the RNA polymerase alpha chain family. As to quaternary structure, homodimer. The RNAP catalytic core consists of 2 alpha, 1 beta, 1 beta' and 1 omega subunit. When a sigma factor is associated with the core the holoenzyme is formed, which can initiate transcription.

The enzyme catalyses RNA(n) + a ribonucleoside 5'-triphosphate = RNA(n+1) + diphosphate. DNA-dependent RNA polymerase catalyzes the transcription of DNA into RNA using the four ribonucleoside triphosphates as substrates. The sequence is that of DNA-directed RNA polymerase subunit alpha from Stenotrophomonas maltophilia (strain R551-3).